Here is a 696-residue protein sequence, read N- to C-terminus: DNA ligase (696 aa).

Residues 36 to 40, 85 to 86, and Glu123 contribute to the NAD(+) site; these read DAEYD and SL. Lys125 serves as the catalytic N6-AMP-lysine intermediate. Positions 146, 181, 319, and 343 each coordinate NAD(+). 4 residues coordinate Zn(2+): Cys437, Cys440, Cys455, and Cys461. Residues 618 to 696 form the BRCT domain; sequence PEGTSLAGKT…EDGLKALLGL (79 aa).

This sequence belongs to the NAD-dependent DNA ligase family. LigA subfamily. The cofactor is Mg(2+). It depends on Mn(2+) as a cofactor.

It catalyses the reaction NAD(+) + (deoxyribonucleotide)n-3'-hydroxyl + 5'-phospho-(deoxyribonucleotide)m = (deoxyribonucleotide)n+m + AMP + beta-nicotinamide D-nucleotide.. Its function is as follows. DNA ligase that catalyzes the formation of phosphodiester linkages between 5'-phosphoryl and 3'-hydroxyl groups in double-stranded DNA using NAD as a coenzyme and as the energy source for the reaction. It is essential for DNA replication and repair of damaged DNA. This chain is DNA ligase, found in Bordetella parapertussis (strain 12822 / ATCC BAA-587 / NCTC 13253).